The sequence spans 463 residues: Bifunctional protein HldE (463 aa).

Residues 1 to 315 (MRKILVIGDL…LILNQTHPKI (315 aa)) are ribokinase. 191 to 194 (NRFE) contacts ATP. Aspartate 260 is a catalytic residue. The interval 334-463 (FTNGCFDILH…IEKIKRAYND (130 aa)) is cytidylyltransferase.

This sequence in the N-terminal section; belongs to the carbohydrate kinase PfkB family. In the C-terminal section; belongs to the cytidylyltransferase family. In terms of assembly, homodimer.

The enzyme catalyses D-glycero-beta-D-manno-heptose 7-phosphate + ATP = D-glycero-beta-D-manno-heptose 1,7-bisphosphate + ADP + H(+). The catalysed reaction is D-glycero-beta-D-manno-heptose 1-phosphate + ATP + H(+) = ADP-D-glycero-beta-D-manno-heptose + diphosphate. The protein operates within nucleotide-sugar biosynthesis; ADP-L-glycero-beta-D-manno-heptose biosynthesis; ADP-L-glycero-beta-D-manno-heptose from D-glycero-beta-D-manno-heptose 7-phosphate: step 1/4. Its pathway is nucleotide-sugar biosynthesis; ADP-L-glycero-beta-D-manno-heptose biosynthesis; ADP-L-glycero-beta-D-manno-heptose from D-glycero-beta-D-manno-heptose 7-phosphate: step 3/4. Its function is as follows. Catalyzes the phosphorylation of D-glycero-D-manno-heptose 7-phosphate at the C-1 position to selectively form D-glycero-beta-D-manno-heptose-1,7-bisphosphate. In terms of biological role, catalyzes the ADP transfer from ATP to D-glycero-beta-D-manno-heptose 1-phosphate, yielding ADP-D-glycero-beta-D-manno-heptose. The polypeptide is Bifunctional protein HldE (Helicobacter acinonychis (strain Sheeba)).